A 132-amino-acid polypeptide reads, in one-letter code: Chemokine-like protein TAFA-5 (132 aa).

The signal sequence occupies residues 1–43 (MAPSPRTGSRQDATALPSMSSTFWAFMILASLLIAYCSQLAAG). Asn113 is a glycosylation site (N-linked (GlcNAc...) asparagine).

This sequence belongs to the TAFA family. Expressed in the subcutaneous and perirenal adipose tissue (at protein level). Highly expressed in adipose tissue with moderate expression in the brain and ovary. Isoform 2: Brain-specific.

Its subcellular location is the secreted. Functionally, acts as a chemokine-like protein by regulating cell proliferation and migration through activation of G protein-coupled receptors (GPCRs), such as S1PR2 and FPR2. Stimulates chemotactic migration of macrophages mediated by the MAPK3/ERK1 and AKT1 pathway. Blocks TNFSF11/RANKL-induced osteoclast formation from macrophages by inhibiting up-regulation of osteoclast fusogenic and differentiation genes. Stimulation of macrophage migration and inhibition of osteoclast formation is mediated via GPCR FPR2. Acts as an adipokine by negatively regulating vascular smooth muscle cell (VSMC) proliferation and migration in response to platelet-derived growth factor stimulation via GPCR S1PR2 and G protein GNA12/GNA13-transmitted RHOA signaling. Inhibits injury-induced cell proliferation and neointima formation in the femoral arteries. In Homo sapiens (Human), this protein is Chemokine-like protein TAFA-5.